The following is a 431-amino-acid chain: Glutamate-1-semialdehyde 2,1-aminomutase (431 aa).

Position 264 is an N6-(pyridoxal phosphate)lysine (K264).

The protein belongs to the class-III pyridoxal-phosphate-dependent aminotransferase family. HemL subfamily. In terms of assembly, homodimer. Pyridoxal 5'-phosphate serves as cofactor.

It localises to the cytoplasm. It carries out the reaction (S)-4-amino-5-oxopentanoate = 5-aminolevulinate. Its pathway is porphyrin-containing compound metabolism; protoporphyrin-IX biosynthesis; 5-aminolevulinate from L-glutamyl-tRNA(Glu): step 2/2. The chain is Glutamate-1-semialdehyde 2,1-aminomutase from Clostridium beijerinckii (strain ATCC 51743 / NCIMB 8052) (Clostridium acetobutylicum).